Here is a 93-residue protein sequence, read N- to C-terminus: Pyrimidine/purine nucleoside phosphorylase (93 aa).

Belongs to the nucleoside phosphorylase PpnP family.

The catalysed reaction is a purine D-ribonucleoside + phosphate = a purine nucleobase + alpha-D-ribose 1-phosphate. It carries out the reaction adenosine + phosphate = alpha-D-ribose 1-phosphate + adenine. It catalyses the reaction cytidine + phosphate = cytosine + alpha-D-ribose 1-phosphate. The enzyme catalyses guanosine + phosphate = alpha-D-ribose 1-phosphate + guanine. The catalysed reaction is inosine + phosphate = alpha-D-ribose 1-phosphate + hypoxanthine. It carries out the reaction thymidine + phosphate = 2-deoxy-alpha-D-ribose 1-phosphate + thymine. It catalyses the reaction uridine + phosphate = alpha-D-ribose 1-phosphate + uracil. The enzyme catalyses xanthosine + phosphate = alpha-D-ribose 1-phosphate + xanthine. Catalyzes the phosphorolysis of diverse nucleosides, yielding D-ribose 1-phosphate and the respective free bases. Can use uridine, adenosine, guanosine, cytidine, thymidine, inosine and xanthosine as substrates. Also catalyzes the reverse reactions. This Sorangium cellulosum (strain So ce56) (Polyangium cellulosum (strain So ce56)) protein is Pyrimidine/purine nucleoside phosphorylase.